The primary structure comprises 107 residues: MSLVIDIADTIVSLTALIGLIITLIKFHSQNKEDAIMQIRKIAQEEIVNFLDTDKFKHSIIDIMNESNVNSKVNDIDSKITQLLAILCYTDSKLKDTELCRSSDRSK.

At 1–4 the chain is on the cytoplasmic side; sequence MSLV. Residues 5–25 form a helical membrane-spanning segment; the sequence is IDIADTIVSLTALIGLIITLI. The Extracellular segment spans residues 26 to 107; that stretch reads KFHSQNKEDA…ELCRSSDRSK (82 aa).

The protein localises to the host membrane. This is an uncharacterized protein from Acidianus sp. F28 (AFV-2).